Consider the following 590-residue polypeptide: Aspartate--tRNA(Asp/Asn) ligase (590 aa).

Position 175 (glutamate 175) interacts with L-aspartate. Positions 199–202 are aspartate; sequence QQYK. L-aspartate contacts are provided by arginine 221 and histidine 450. 221-223 is a binding site for ATP; that stretch reads RDE. ATP is bound at residue glutamate 484. Residue arginine 491 coordinates L-aspartate. 536 to 539 provides a ligand contact to ATP; the sequence is GVDR.

The protein belongs to the class-II aminoacyl-tRNA synthetase family. Type 1 subfamily. In terms of assembly, homodimer.

Its subcellular location is the cytoplasm. The catalysed reaction is tRNA(Asx) + L-aspartate + ATP = L-aspartyl-tRNA(Asx) + AMP + diphosphate. Functionally, aspartyl-tRNA synthetase with relaxed tRNA specificity since it is able to aspartylate not only its cognate tRNA(Asp) but also tRNA(Asn). Reaction proceeds in two steps: L-aspartate is first activated by ATP to form Asp-AMP and then transferred to the acceptor end of tRNA(Asp/Asn). This chain is Aspartate--tRNA(Asp/Asn) ligase, found in Nitrobacter winogradskyi (strain ATCC 25391 / DSM 10237 / CIP 104748 / NCIMB 11846 / Nb-255).